The primary structure comprises 498 residues: ATP synthase subunit beta, chloroplastic (498 aa).

172-179 (GGAGVGKT) is a binding site for ATP.

It belongs to the ATPase alpha/beta chains family. In terms of assembly, F-type ATPases have 2 components, CF(1) - the catalytic core - and CF(0) - the membrane proton channel. CF(1) has five subunits: alpha(3), beta(3), gamma(1), delta(1), epsilon(1). CF(0) has four main subunits: a(1), b(1), b'(1) and c(9-12).

It localises to the plastid. The protein resides in the chloroplast thylakoid membrane. It catalyses the reaction ATP + H2O + 4 H(+)(in) = ADP + phosphate + 5 H(+)(out). In terms of biological role, produces ATP from ADP in the presence of a proton gradient across the membrane. The catalytic sites are hosted primarily by the beta subunits. This is ATP synthase subunit beta, chloroplastic from Vitis vinifera (Grape).